Consider the following 200-residue polypeptide: Inner membrane-spanning protein YciB (200 aa).

The next 6 helical transmembrane spans lie at 1-21 (MPPLLKLALELGPLLVFFFAN), 37-57 (IGAPIFLATALFMAATVIALA), 66-86 (LPIMPLVSGIVVLVFGALTLW), 103-123 (LFGGILLGGLFFGKSLLGYVF), 136-156 (KLTLRWGLFFIFLAIVNEIVW), and 167-187 (FKVWGIMPITIVFTLLQMPLI).

This sequence belongs to the YciB family.

Its subcellular location is the cell inner membrane. Functionally, plays a role in cell envelope biogenesis, maintenance of cell envelope integrity and membrane homeostasis. The sequence is that of Inner membrane-spanning protein YciB from Brucella suis biovar 1 (strain 1330).